The chain runs to 199 residues: Shikimate kinase (199 aa).

34–39 serves as a coordination point for ATP; the sequence is GAGKTA. Residue Thr-38 coordinates Mg(2+). Substrate is bound by residues Asp-56, Arg-80, and Gly-102. Arg-140 is a binding site for ATP. Arg-159 serves as a coordination point for substrate.

The protein belongs to the shikimate kinase family. In terms of assembly, monomer. Requires Mg(2+) as cofactor.

It is found in the cytoplasm. It carries out the reaction shikimate + ATP = 3-phosphoshikimate + ADP + H(+). It functions in the pathway metabolic intermediate biosynthesis; chorismate biosynthesis; chorismate from D-erythrose 4-phosphate and phosphoenolpyruvate: step 5/7. Catalyzes the specific phosphorylation of the 3-hydroxyl group of shikimic acid using ATP as a cosubstrate. The protein is Shikimate kinase of Cereibacter sphaeroides (strain ATCC 17023 / DSM 158 / JCM 6121 / CCUG 31486 / LMG 2827 / NBRC 12203 / NCIMB 8253 / ATH 2.4.1.) (Rhodobacter sphaeroides).